The chain runs to 582 residues: L-fucose isomerase (582 aa).

Residues glutamate 333 and aspartate 357 each act as proton acceptor in the active site. The Mn(2+) site is built by glutamate 333, aspartate 357, and histidine 520.

It belongs to the L-fucose isomerase family. It depends on Mn(2+) as a cofactor.

It localises to the cytoplasm. It catalyses the reaction L-fucose = L-fuculose. It participates in carbohydrate degradation; L-fucose degradation; L-lactaldehyde and glycerone phosphate from L-fucose: step 1/3. Its function is as follows. Converts the aldose L-fucose into the corresponding ketose L-fuculose. This is L-fucose isomerase from Vibrio vulnificus (strain YJ016).